The primary structure comprises 593 residues: Probable 5'-nucleotidase (593 aa).

Residues 1–21 form the signal peptide; that stretch reads MKRFIPHRVIHAVCIGLALVG. Cys-22 carries the N-palmitoyl cysteine lipid modification. Cys-22 carries S-diacylglycerol cysteine lipidation. 5 residues coordinate a divalent metal cation: Asp-41, His-43, Asp-91, Asn-123, and His-224. Substrate is bound by residues Phe-456 and 539–545; that span reads YIARGKD.

Belongs to the 5'-nucleotidase family. A divalent metal cation is required as a cofactor.

It is found in the cell membrane. It catalyses the reaction a ribonucleoside 5'-phosphate + H2O = a ribonucleoside + phosphate. This Treponema pallidum (strain Nichols) protein is Probable 5'-nucleotidase.